A 665-amino-acid polypeptide reads, in one-letter code: Translation factor guf1, mitochondrial (665 aa).

The transit peptide at 1 to 40 (MRGCLQLARWLSAAPTRPAASHWPGLCAAPRFFSHSAILR) directs the protein to the mitochondrion. The tr-type G domain occupies 67–247 (ERYRNFCIVA…TVVDKIPAPI (181 aa)). GTP contacts are provided by residues 76-83 (AHVDHGKS), 140-144 (DTPGH), and 194-197 (NKVD).

It belongs to the TRAFAC class translation factor GTPase superfamily. Classic translation factor GTPase family. LepA subfamily.

It localises to the mitochondrion inner membrane. The enzyme catalyses GTP + H2O = GDP + phosphate + H(+). In terms of biological role, promotes mitochondrial protein synthesis. May act as a fidelity factor of the translation reaction, by catalyzing a one-codon backward translocation of tRNAs on improperly translocated ribosomes. Binds to mitochondrial ribosomes in a GTP-dependent manner. This chain is Translation factor guf1, mitochondrial (guf1), found in Aspergillus terreus (strain NIH 2624 / FGSC A1156).